Reading from the N-terminus, the 253-residue chain is Imidazole glycerol phosphate synthase subunit HisF (253 aa).

Residues D11 and D130 contribute to the active site.

It belongs to the HisA/HisF family. In terms of assembly, heterodimer of HisH and HisF.

It localises to the cytoplasm. It carries out the reaction 5-[(5-phospho-1-deoxy-D-ribulos-1-ylimino)methylamino]-1-(5-phospho-beta-D-ribosyl)imidazole-4-carboxamide + L-glutamine = D-erythro-1-(imidazol-4-yl)glycerol 3-phosphate + 5-amino-1-(5-phospho-beta-D-ribosyl)imidazole-4-carboxamide + L-glutamate + H(+). Its pathway is amino-acid biosynthesis; L-histidine biosynthesis; L-histidine from 5-phospho-alpha-D-ribose 1-diphosphate: step 5/9. Functionally, IGPS catalyzes the conversion of PRFAR and glutamine to IGP, AICAR and glutamate. The HisF subunit catalyzes the cyclization activity that produces IGP and AICAR from PRFAR using the ammonia provided by the HisH subunit. This chain is Imidazole glycerol phosphate synthase subunit HisF, found in Clostridium botulinum (strain 657 / Type Ba4).